We begin with the raw amino-acid sequence, 163 residues long: Thiol peroxidase (163 aa).

The Thioredoxin domain occupies 16–162; the sequence is LQVGDTAHDF…YDAAIAAVKS (147 aa). Catalysis depends on Cys58, which acts as the Cysteine sulfenic acid (-SOH) intermediate. Cys58 and Cys92 are disulfide-bonded.

Belongs to the peroxiredoxin family. Tpx subfamily. In terms of assembly, homodimer.

The enzyme catalyses a hydroperoxide + [thioredoxin]-dithiol = an alcohol + [thioredoxin]-disulfide + H2O. In terms of biological role, thiol-specific peroxidase that catalyzes the reduction of hydrogen peroxide and organic hydroperoxides to water and alcohols, respectively. Plays a role in cell protection against oxidative stress by detoxifying peroxides. The chain is Thiol peroxidase from Streptococcus sanguinis.